Consider the following 278-residue polypeptide: NAD kinase (278 aa).

The active-site Proton acceptor is Asp-56. Residues 56-57, 132-133, Arg-158, Asp-160, and 171-176 each bind NAD(+); these read DG, NE, and TAYNKS.

It belongs to the NAD kinase family. It depends on a divalent metal cation as a cofactor.

It is found in the cytoplasm. The catalysed reaction is NAD(+) + ATP = ADP + NADP(+) + H(+). Involved in the regulation of the intracellular balance of NAD and NADP, and is a key enzyme in the biosynthesis of NADP. Catalyzes specifically the phosphorylation on 2'-hydroxyl of the adenosine moiety of NAD to yield NADP. This Streptococcus agalactiae serotype V (strain ATCC BAA-611 / 2603 V/R) protein is NAD kinase.